Consider the following 152-residue polypeptide: MAVALPEVVEELLSEMAAAVRDSARIPDELLLSLEFVFGSSAIQALDLVDRESVTLISSPSGRRVYQVLGSSGKTYTCLASCHYCSCPAFSFSVLRKSDSLLCKHLLAIYLSQLLRNCQQLHVSDKQLTDLLMEDTRRIKGAAGTWTSKTEA.

The SWIM-type zinc-finger motif lies at 76-114; it reads YTCLASCHYCSCPAFSFSVLRKSDSLLCKHLLAIYLSQL.

The protein belongs to the SWS1 family. Interacts with RAD51D and XRCC3; involved in homologous recombination repair. Interacts with SWSAP1; they form a functional complex involved in homologous recombination repair and stabilize each other.

Its subcellular location is the nucleus. In terms of biological role, involved in early stages of the homologous recombination repair (HRR) pathway of double-stranded DNA breaks arising during DNA replication or induced by DNA-damaging agents. Required for meiotic progression, hence for fertility. The polypeptide is Zinc finger SWIM domain-containing protein 7 (Zswim7) (Mus musculus (Mouse)).